The following is an 83-amino-acid chain: Small ribosomal subunit protein uS17 (83 aa).

The protein belongs to the universal ribosomal protein uS17 family. As to quaternary structure, part of the 30S ribosomal subunit.

Functionally, one of the primary rRNA binding proteins, it binds specifically to the 5'-end of 16S ribosomal RNA. This is Small ribosomal subunit protein uS17 from Ehrlichia canis (strain Jake).